Consider the following 185-residue polypeptide: Biogenesis of lysosome-related organelles complex 1 subunit 5 (185 aa).

Over residues 1–16 the composition is skewed to polar residues; sequence MSSSNSPVKSTGSPFI. The segment at 1 to 24 is disordered; it reads MSSSNSPVKSTGSPFIQSLKPRDN. Positions 98 to 182 form a coiled coil; that stretch reads MQDQLASVLK…VTMEKELSKQ (85 aa).

It belongs to the BLOC1S5 family. Component of the biogenesis of lysosome-related organelles complex 1 (BLOC-1).

Component of the BLOC-1 complex, a complex that is required for normal biogenesis of lysosome-related organelles (LRO), such as platelet dense granules and melanosomes. Plays a role in intracellular vesicle trafficking. The sequence is that of Biogenesis of lysosome-related organelles complex 1 subunit 5 (bloc1s5) from Xenopus tropicalis (Western clawed frog).